The following is a 475-amino-acid chain: Sulfate adenylyltransferase subunit 1 (475 aa).

The tr-type G domain occupies 24 to 240; sequence KSLLRFLTCG…ESAEVERELE (217 aa). The segment at 33–40 is G1; the sequence is GSVDDGKS. Residue 33 to 40 participates in GTP binding; sequence GSVDDGKS. The segment at 91-95 is G2; the sequence is GITID. Positions 112-115 are G3; that stretch reads DTPG. Residues 112–116 and 167–170 contribute to the GTP site; these read DTPGH and NKMD. Residues 167-170 are G4; that stretch reads NKMD. Residues 204–206 are G5; sequence SAL.

This sequence belongs to the TRAFAC class translation factor GTPase superfamily. Classic translation factor GTPase family. CysN/NodQ subfamily. In terms of assembly, heterodimer composed of CysD, the smaller subunit, and CysN.

It carries out the reaction sulfate + ATP + H(+) = adenosine 5'-phosphosulfate + diphosphate. It functions in the pathway sulfur metabolism; hydrogen sulfide biosynthesis; sulfite from sulfate: step 1/3. Its function is as follows. With CysD forms the ATP sulfurylase (ATPS) that catalyzes the adenylation of sulfate producing adenosine 5'-phosphosulfate (APS) and diphosphate, the first enzymatic step in sulfur assimilation pathway. APS synthesis involves the formation of a high-energy phosphoric-sulfuric acid anhydride bond driven by GTP hydrolysis by CysN coupled to ATP hydrolysis by CysD. The polypeptide is Sulfate adenylyltransferase subunit 1 (Aeromonas hydrophila subsp. hydrophila (strain ATCC 7966 / DSM 30187 / BCRC 13018 / CCUG 14551 / JCM 1027 / KCTC 2358 / NCIMB 9240 / NCTC 8049)).